Reading from the N-terminus, the 300-residue chain is tRNA dimethylallyltransferase (300 aa).

9–16 (GTTASGKS) contributes to the ATP binding site. 11-16 (TASGKS) contributes to the substrate binding site. Residues 34–37 (DSLC) form an interaction with substrate tRNA region.

This sequence belongs to the IPP transferase family. As to quaternary structure, monomer. Mg(2+) serves as cofactor.

It carries out the reaction adenosine(37) in tRNA + dimethylallyl diphosphate = N(6)-dimethylallyladenosine(37) in tRNA + diphosphate. Its function is as follows. Catalyzes the transfer of a dimethylallyl group onto the adenine at position 37 in tRNAs that read codons beginning with uridine, leading to the formation of N6-(dimethylallyl)adenosine (i(6)A). The polypeptide is tRNA dimethylallyltransferase (Campylobacter fetus subsp. fetus (strain 82-40)).